A 578-amino-acid chain; its full sequence is DNA polymerase III subunit gamma/tau (578 aa).

42–49 (GPRGCGKT) is an ATP binding site. Cys-61, Cys-70, Cys-73, and Cys-76 together coordinate Zn(2+). Disordered regions lie at residues 389–423 (APQA…ASSE) and 525–559 (AVNP…RDPE). Basic and acidic residues-rich tracts occupy residues 402-412 (EPKHQPAREPR) and 536-559 (QRDE…RDPE).

Belongs to the DnaX/STICHEL family. DNA polymerase III contains a core (composed of alpha, epsilon and theta chains) that associates with a tau subunit. This core dimerizes to form the POLIII' complex. PolIII' associates with the gamma complex (composed of gamma, delta, delta', psi and chi chains) and with the beta chain to form the complete DNA polymerase III complex.

The enzyme catalyses DNA(n) + a 2'-deoxyribonucleoside 5'-triphosphate = DNA(n+1) + diphosphate. DNA polymerase III is a complex, multichain enzyme responsible for most of the replicative synthesis in bacteria. This DNA polymerase also exhibits 3' to 5' exonuclease activity. The protein is DNA polymerase III subunit gamma/tau (dnaX) of Mycobacterium bovis (strain ATCC BAA-935 / AF2122/97).